Reading from the N-terminus, the 131-residue chain is Small ribosomal subunit protein uS8 (131 aa).

Belongs to the universal ribosomal protein uS8 family. In terms of assembly, part of the 30S ribosomal subunit. Contacts proteins S5 and S12.

Functionally, one of the primary rRNA binding proteins, it binds directly to 16S rRNA central domain where it helps coordinate assembly of the platform of the 30S subunit. This chain is Small ribosomal subunit protein uS8, found in Hydrogenovibrio crunogenus (strain DSM 25203 / XCL-2) (Thiomicrospira crunogena).